The primary structure comprises 268 residues: Peptide transport system ATP-binding protein SapF (268 aa).

One can recognise an ABC transporter domain in the interval 6-251 (LEVRNLSKTF…PLHELTKRLI (246 aa)). ATP is bound at residue 47-54 (GENGSGKS).

This sequence belongs to the ABC transporter superfamily.

It is found in the cell inner membrane. Functionally, involved in a peptide intake transport system that plays a role in the resistance to antimicrobial peptides. The sequence is that of Peptide transport system ATP-binding protein SapF (sapF) from Escherichia coli O6:H1 (strain CFT073 / ATCC 700928 / UPEC).